The following is a 1017-amino-acid chain: Dopamine dehydroxylase (1017 aa).

The segment at residues 1–34 is a signal peptide (tat-type signal); that stretch reads MGNLTMSRRTFVKTAAITGAAAAAFGASTHTALA. The 4Fe-4S Mo/W bis-MGD-type domain occupies 45–103; the sequence is DTVAVKTCCRGCGKMECGVKVIVQNGRAIRVEGDEGAFQSMGNCCTKSQSSIQAAYHPD. Residues C53, C56, C61, and C89 each coordinate [4Fe-4S] cluster. K91 functions as the Electron donor/acceptor in the catalytic mechanism.

This sequence belongs to the prokaryotic molybdopterin-containing oxidoreductase family. [4Fe-4S] cluster serves as cofactor. Mo-bis(molybdopterin guanine dinucleotide) is required as a cofactor. In terms of processing, predicted to be exported by the Tat system. The position of the signal peptide cleavage has not been experimentally proven.

It carries out the reaction dopamine + AH2 = 3-tyramine + A + H2O. Involved in drug metabolism, as part of an interspecies gut bacterial pathway for Levodopa (L-dopa) metabolism, acting on dopamine produced by Enterecoccus L-dopa decarboxylase. Removes the para hydroxyl group of dopamine to produce m-tyramine (3-tyramine). It is possible that dopamine dehydroxylation influences the multiple side effects of L-dopa administration linked to dopamine production in the treatment of Parkinson's disease. The sequence is that of Dopamine dehydroxylase from Eggerthella lenta (Eubacterium lentum).